A 419-amino-acid polypeptide reads, in one-letter code: Probable serine/threonine-protein kinase CST (419 aa).

The N-myristoyl glycine moiety is linked to residue Gly-2. Cys-4 carries the S-palmitoyl cysteine lipid modification. The segment at 8–48 (FSSSSPSKTGLHSHATTNNHSNGTEFSSTTGATTNSSVGQQ) is disordered. The segment covering 15 to 48 (KTGLHSHATTNNHSNGTEFSSTTGATTNSSVGQQ) has biased composition (polar residues). Residues 86–368 (FKPDSMLGQG…KEVVEVLEHI (283 aa)) enclose the Protein kinase domain. An ATP-binding site is contributed by 92-100 (LGQGGFGKV). A Phosphoserine modification is found at Ser-117. Lys-124 contributes to the ATP binding site. A Phosphotyrosine modification is found at Tyr-169. Catalysis depends on Asp-218, which acts as the Proton acceptor. Residue Ser-222 is modified to Phosphoserine. 2 positions are modified to phosphothreonine: Thr-253 and Thr-258. Residue Tyr-266 is modified to Phosphotyrosine. Polar residues predominate over residues 378 to 390 (SSTKQAVANSSRS). Positions 378–419 (SSTKQAVANSSRSSPHHYRYKAGALGAERKRATPGRFGSVEK) are disordered.

This sequence belongs to the protein kinase superfamily. Ser/Thr protein kinase family. Interacts with SOBIR1/EVR and RLK5/HAE. Post-translationally, autophosphorylated on serine, threonine and tyrosine residues.

Its subcellular location is the cell membrane. The protein localises to the nucleus. The catalysed reaction is L-seryl-[protein] + ATP = O-phospho-L-seryl-[protein] + ADP + H(+). It catalyses the reaction L-threonyl-[protein] + ATP = O-phospho-L-threonyl-[protein] + ADP + H(+). Functionally, acts as a spatial inhibitor of signaling that modulates abscission zone cell adhesion and expansion. Acts both directly and indirectly by physically interacting with RLK5/HAE and SOBIR1/EVR at the cell surface. The protein is Probable serine/threonine-protein kinase CST of Arabidopsis thaliana (Mouse-ear cress).